A 156-amino-acid chain; its full sequence is Histidine-containing phosphotransfer protein 2 (156 aa).

At Met1 the chain carries N-acetylmethionine. An HPt domain is found at 40–147 (SPDFVSEVLS…NLEKQIIQAG (108 aa)). A Phosphohistidine modification is found at His82.

Interacts with the B-type response regulators ARR1, ARR2 and ARR10. Binds to AHK1, AHK2, AHK3, AHK4, AHK5, ETR1 and CKI1. Post-translationally, two-component system major event consists of a His-to-Asp phosphorelay between a sensor histidine kinase (HK) and a response regulator (RR). In plants, the His-to-Asp phosphorelay involves an additional intermediate named Histidine-containing phosphotransfer protein (HPt). This multistep phosphorelay consists of a His-Asp-His-Asp sequential transfer of a phosphate group between first a His and an Asp of the HK protein, followed by the transfer to a conserved His of the HPt protein and finally the transfer to an Asp in the receiver domain of the RR protein. In terms of tissue distribution, strongly expressed in flowers and roots. Detected also in leaves, siliques and stems.

Its subcellular location is the cytoplasm. It is found in the cytosol. The protein resides in the nucleus. In terms of biological role, functions as a two-component phosphorelay mediators between cytokinin sensor histidine kinases and response regulator (B-type ARRs). Plays an important role in propagating cytokinin signal transduction through the multistep His-to-Asp phosphorelay. This chain is Histidine-containing phosphotransfer protein 2 (AHP2), found in Arabidopsis thaliana (Mouse-ear cress).